Reading from the N-terminus, the 376-residue chain is Mitogen-activated protein kinase 2 (376 aa).

One can recognise a Protein kinase domain in the interval 32–319; that stretch reads YVPIKPIGRG…VTEALQHPYM (288 aa). ATP is bound by residues 38-46 and Lys61; that span reads IGRGAYGVV. Catalysis depends on Asp158, which acts as the Proton acceptor. Residue Thr191 is modified to Phosphothreonine. The TXY signature appears at 191 to 193; sequence TEY. Phosphotyrosine is present on Tyr193. The residue at position 196 (Thr196) is a Phosphothreonine.

It belongs to the protein kinase superfamily. CMGC Ser/Thr protein kinase family. MAP kinase subfamily. As to quaternary structure, interacts with MKK3. Post-translationally, dually phosphorylated on Thr-191 and Tyr-193, which activates the enzyme. Phosphorylated on Ser residue. As to expression, highest levels in the stem. Present in the leaf, root and flower, but not in seeds.

The catalysed reaction is L-seryl-[protein] + ATP = O-phospho-L-seryl-[protein] + ADP + H(+). It carries out the reaction L-threonyl-[protein] + ATP = O-phospho-L-threonyl-[protein] + ADP + H(+). Activated by threonine and tyrosine phosphorylation. In Arabidopsis thaliana (Mouse-ear cress), this protein is Mitogen-activated protein kinase 2 (MPK2).